Here is a 365-residue protein sequence, read N- to C-terminus: Flagellar P-ring protein (365 aa).

The signal sequence occupies residues 1-19 (MIKFLSALILLLVTTAAQA).

It belongs to the FlgI family. As to quaternary structure, the basal body constitutes a major portion of the flagellar organelle and consists of four rings (L,P,S, and M) mounted on a central rod.

The protein resides in the periplasm. Its subcellular location is the bacterial flagellum basal body. In terms of biological role, assembles around the rod to form the L-ring and probably protects the motor/basal body from shearing forces during rotation. This is Flagellar P-ring protein from Escherichia coli O9:H4 (strain HS).